The primary structure comprises 400 residues: MTQYASPLLQTLLDTDAYKLHMQQAVFHHYYDVHVAAEFRCRGDDLLGIYADAIREQVDAMQHLALSDAEYQWLSGLPFFKSDYLQWLKTFRYDPTQVQIRNDGGKLDIRLSGPWREVIMWEVPLLAVISELVHRYRSPEASVDQALAHLEVKLDDFRTMTDGLDLSAFRLMDFGTRRRFSRDVQQAIVERLKLEPWFIGTSNYDLARRLSLTPMGTQAHEWFQAHQQISPDLANSQIAALQAWLDEYPDMLGIALTDCITMDAFLRDFGPEFAGRYQGLRHDSGDPVQWGEKAIAHYQQLGIDPLSKTLIFSDNLDFAKAIELYRHFADRVKLGFGIGTRLTCDIPHVKPLNIVIKLVECNGRPVAKLSDSPGKTICHDKAFVRALRKAFDLPQVRKAS.

His-220 carries the post-translational modification Phosphohistidine; by autocatalysis.

This sequence belongs to the NAPRTase family. In terms of processing, transiently phosphorylated on a His residue during the reaction cycle. Phosphorylation strongly increases the affinity for substrates and increases the rate of nicotinate D-ribonucleotide production. Dephosphorylation regenerates the low-affinity form of the enzyme, leading to product release.

The catalysed reaction is nicotinate + 5-phospho-alpha-D-ribose 1-diphosphate + ATP + H2O = nicotinate beta-D-ribonucleotide + ADP + phosphate + diphosphate. It functions in the pathway cofactor biosynthesis; NAD(+) biosynthesis; nicotinate D-ribonucleotide from nicotinate: step 1/1. Functionally, catalyzes the synthesis of beta-nicotinate D-ribonucleotide from nicotinate and 5-phospho-D-ribose 1-phosphate at the expense of ATP. The polypeptide is Nicotinate phosphoribosyltransferase (Cronobacter sakazakii (strain ATCC BAA-894) (Enterobacter sakazakii)).